Consider the following 295-residue polypeptide: Small ribosomal subunit protein uS2 (295 aa).

Positions 261-295 are disordered; it reads QAKKFSKTKNIDEETNTEFEQVLNDADENKNSDNA.

It belongs to the universal ribosomal protein uS2 family.

This chain is Small ribosomal subunit protein uS2, found in Rickettsia rickettsii (strain Sheila Smith).